Consider the following 145-residue polypeptide: TFTNDESQHIHDVCGKIPVDQVGAEALGRLILVNPWTRRYFKSFGDLSSAEAIQHNPKVASHGAKVMHSIAEAVKHLDDLKAYYADLSTIHCKKLYVDPANFKLFGGIVSIVTGMHLGTDYTAQKQAAFEKFLHHVEAALATGYH.

In terms of domain architecture, Globin spans T1–H145. Heme b is bound by residues H62 and H91.

The protein belongs to the globin family. As to quaternary structure, major hemoglobin is a tetramer of two alpha-1 chains and two beta-1 chains. As to expression, red blood cells.

In terms of biological role, involved in oxygen transport from the lung to the various peripheral tissues. The polypeptide is Hemoglobin subunit beta-1 (HBB1) (Triturus cristatus (Great crested newt)).